A 482-amino-acid polypeptide reads, in one-letter code: Aspartyl/glutamyl-tRNA(Asn/Gln) amidotransferase subunit B (482 aa).

Belongs to the GatB/GatE family. GatB subfamily. In terms of assembly, heterotrimer of A, B and C subunits.

It catalyses the reaction L-glutamyl-tRNA(Gln) + L-glutamine + ATP + H2O = L-glutaminyl-tRNA(Gln) + L-glutamate + ADP + phosphate + H(+). The catalysed reaction is L-aspartyl-tRNA(Asn) + L-glutamine + ATP + H2O = L-asparaginyl-tRNA(Asn) + L-glutamate + ADP + phosphate + 2 H(+). Allows the formation of correctly charged Asn-tRNA(Asn) or Gln-tRNA(Gln) through the transamidation of misacylated Asp-tRNA(Asn) or Glu-tRNA(Gln) in organisms which lack either or both of asparaginyl-tRNA or glutaminyl-tRNA synthetases. The reaction takes place in the presence of glutamine and ATP through an activated phospho-Asp-tRNA(Asn) or phospho-Glu-tRNA(Gln). This chain is Aspartyl/glutamyl-tRNA(Asn/Gln) amidotransferase subunit B, found in Methanoregula boonei (strain DSM 21154 / JCM 14090 / 6A8).